The primary structure comprises 560 residues: MRSDTIKKGFEKAPHRSLLKATGAISTRDDYSKPFIGICNSFNELIPGHAHLQELGRIAKEAVREAGGVPFEFNTIGVCDGIAMGHVGMRYSLASRELIADSVETVVEAHRLDGLVCIPNCDKITPGMMMGALRTNVPVIFVSGGPMSAGHTPSGKTVDLISVFEAVGQCSTGEITEDELQTIEECGCPGCGSCSGMFTANSMNCLCEALGFALPGNGTILAADPRRNELVKAAAGRIVDLVNKDVRPRSILSRQSMLNAFALDLAMGGSTNTILHTLAIASEAELEFDFSELNDLSAKTPYICKVSPATTEVHIEDVDRAGGISAILKELSKVEGLLDLSAPTVTGKTLGENIADAEVLDRSVIRSVEEPYSATGGLAVLYGNLAPNGSVVKTGAVSPSMMKHTGPAKVYDCQDDAIAGIMNGDVKSGDVVVIRYEGPRGGPGMPEMLSPTSAIMGRGLGDSVALITDGRFSGGSRGACVGHVSPEAADRGPIAAVQTGDMITIDIPGRTMSVALDDETIRQRIEALPEFEPKIKKGYLARYARMVTSANTGAVLTTNF.

D80 is a binding site for Mg(2+). Position 121 (C121) interacts with [2Fe-2S] cluster. Mg(2+)-binding residues include D122 and K123. K123 carries the post-translational modification N6-carboxylysine. C194 provides a ligand contact to [2Fe-2S] cluster. E447 contacts Mg(2+). The active-site Proton acceptor is the S473.

This sequence belongs to the IlvD/Edd family. In terms of assembly, homodimer. Requires [2Fe-2S] cluster as cofactor. It depends on Mg(2+) as a cofactor.

It catalyses the reaction (2R)-2,3-dihydroxy-3-methylbutanoate = 3-methyl-2-oxobutanoate + H2O. The catalysed reaction is (2R,3R)-2,3-dihydroxy-3-methylpentanoate = (S)-3-methyl-2-oxopentanoate + H2O. Its pathway is amino-acid biosynthesis; L-isoleucine biosynthesis; L-isoleucine from 2-oxobutanoate: step 3/4. It participates in amino-acid biosynthesis; L-valine biosynthesis; L-valine from pyruvate: step 3/4. Functions in the biosynthesis of branched-chain amino acids. Catalyzes the dehydration of (2R,3R)-2,3-dihydroxy-3-methylpentanoate (2,3-dihydroxy-3-methylvalerate) into 2-oxo-3-methylpentanoate (2-oxo-3-methylvalerate) and of (2R)-2,3-dihydroxy-3-methylbutanoate (2,3-dihydroxyisovalerate) into 2-oxo-3-methylbutanoate (2-oxoisovalerate), the penultimate precursor to L-isoleucine and L-valine, respectively. The sequence is that of Dihydroxy-acid dehydratase from Chlorobaculum parvum (strain DSM 263 / NCIMB 8327) (Chlorobium vibrioforme subsp. thiosulfatophilum).